The sequence spans 482 residues: MAALMTPGTGAPPAPGDFSGEGSQGLPDPSPEPKQLPELIRMKRDGGRLSEADIRGFVAAVVNGSAQGAQIGAMLMAIRLRGMDLEETSVLTQALAQSGQQLEWPEAWRQQLVDKHSTGGVGDKVSLVLAPALAACGCKVPMISGRGLGHTGGTLDKLESIPGFNVIQSPEQMQVLLDQAGCCIVGQSEQLVPADGILYAARDVTATVDSLPLITASILSKKLVEGLSALVVDVKFGGAAVFPNQEQARELAKTLVGVGASLGLRVAAALTAMDKPLGRCVGHALEVEEALLCMDGAGPPDLRDLVTTLGGALLWLSGHAGTQAQGAARVAAALDDGSALGRFERMLAAQGVDPGLARALCSGSPAERRQLLPRAREQEELLAPADGTVELVRALPLALVLHELGAGRSRAGEPLRLGVGAELLVDVGQRLRRGTPWLRVHRDGPALSGPQSRALQEALVLSDRAPFAAPSPFAELVLPPQQ.

A propeptide spanning residues 1 to 10 is cleaved from the precursor; that stretch reads MAALMTPGTG. Positions 1-36 are disordered; that stretch reads MAALMTPGTGAPPAPGDFSGEGSQGLPDPSPEPKQL. Phosphothreonine is present on T6. Substrate contacts are provided by H116, R202, S217, and K221. 2 R-V-A-A-A-L-X(5,6)-L-G-R repeats span residues 265–279 and 329–342; these read RVAA…PLGR and RVAA…ALGR. R-A-L-X-X-A-L-V-L repeat units follow at residues 393 to 401 and 453 to 461; these read RALPLALVL and RALQEALVL.

It belongs to the thymidine/pyrimidine-nucleoside phosphorylase family. In terms of assembly, homodimer.

The catalysed reaction is thymidine + phosphate = 2-deoxy-alpha-D-ribose 1-phosphate + thymine. It participates in pyrimidine metabolism; dTMP biosynthesis via salvage pathway; dTMP from thymine: step 1/2. In terms of biological role, may have a role in maintaining the integrity of the blood vessels. Has growth promoting activity on endothelial cells, angiogenic activity in vivo and chemotactic activity on endothelial cells in vitro. Its function is as follows. Catalyzes the reversible phosphorolysis of thymidine. The produced molecules are then utilized as carbon and energy sources or in the rescue of pyrimidine bases for nucleotide synthesis. This chain is Thymidine phosphorylase, found in Homo sapiens (Human).